Consider the following 318-residue polypeptide: Aspartate carbamoyltransferase catalytic subunit (318 aa).

Carbamoyl phosphate-binding residues include R59 and T60. K87 lines the L-aspartate pocket. Carbamoyl phosphate contacts are provided by R109, H137, and Q140. L-aspartate is bound by residues R170 and R224. 2 residues coordinate carbamoyl phosphate: G265 and P266.

It belongs to the aspartate/ornithine carbamoyltransferase superfamily. ATCase family. Heterododecamer (2C3:3R2) of six catalytic PyrB chains organized as two trimers (C3), and six regulatory PyrI chains organized as three dimers (R2).

The catalysed reaction is carbamoyl phosphate + L-aspartate = N-carbamoyl-L-aspartate + phosphate + H(+). It functions in the pathway pyrimidine metabolism; UMP biosynthesis via de novo pathway; (S)-dihydroorotate from bicarbonate: step 2/3. Its function is as follows. Catalyzes the condensation of carbamoyl phosphate and aspartate to form carbamoyl aspartate and inorganic phosphate, the committed step in the de novo pyrimidine nucleotide biosynthesis pathway. The protein is Aspartate carbamoyltransferase catalytic subunit of Rhizobium etli (strain CIAT 652).